A 1092-amino-acid chain; its full sequence is MPGDEQRERTADDAVTEPSRIARLIAVVAGIAGVLLCGLVPLLPVEETTATVLWPQGVGADGNVTELTAPLVAGAPRALDVTIPCRAVAELPADGGVVFSTNPAGGIEAGRNGMFIRANADVVYVAFRDTVAAVAPREAVDSGACSEIHVWADVSAVGADFAGIPDASGTLPVDKRPQVSGVFTDLKVPAQPGLAARIDIDTRFITSPTLLKTAVMVLGLACVIGSIVALALLDRGWRRRPARTRGRAGLWTWITDTGVIGGLLIWHIVGAPTSDDGYNMTIARVASEAGYTTNYYRYFGASEAPFDWYQSVLSHLASISTAGVWMRLPATAAAIATWLIISRCVLPRIGRRVAANRVAMLTAGATFLAAWLPFNNGLRPEPLIAFAVITVWMLVENSIGTRRLWPAAVAIVIAMFSVTLAPQGLIALAPLLVGARAIGRVVTARRAAPGSWRPCPLAASVAVVFVIIFRDQTLATVAESVRIKYVVGPTIPWYQEFLRYYFLTVEDSVDGSLTRRFAVLVLLLCLFGLIMVLLRRGRVPGAVSGPLWRLCGSTAIGLLLLILTPTKWAIQFGAFAGLAGALGGVTAFAFARVGLHSRRNLALYVTALLFILAWATSGLNGWFYVGNYGVPWFDKQPVIAHYPVTTIFLVLAIVGGLLAGWLHFRMDYAGHTEVADTGRNRALASTPLLIVATIMVVLELGSMVKATVGRYPVYTVGSANIAALRSAGDSCAMADAVLVEADPNEGMLQPVPGQRFGDYGPLGGEDPVGFTPSGVSEHLEPEPVGTNPGTPNSEGPVDKPNIGIAYAGDTGGGYAPEGVNGSRVFLPFGLDPSRTPVMGSYGENKLAAKATSAWYQLPPRTPDRPLVTVAAAGAIWYYEEDGSFNYGQSLKLQWGVHRPDGTYQALSEVQPIDIFQQKAWRNLRFPLAWAPPEANVARIVADDPNLSEDQWCAFTPPRVPVLQTAQQFLGSQTPVLMDIATAANFPCQRPFAERLGVAELPEYRIIPNFKQMVVSSNQWQSAADGGPFLFIQALLRTEAIPTYLRDDWYRDWGSIERYIRVVPQEQAPTAAIEEGSTRVFGWSRGGPIRALP.

A run of 13 helical transmembrane segments spans residues 21-43 (IARL…VPLL), 214-233 (AVMV…LALL), 249-271 (GLWT…IVGA), 324-346 (VWMR…RCVL), 353-372 (VAAN…AAWL), 382-399 (PLIA…ENSI), 404-426 (LWPA…QGLI), 517-534 (FAVL…MVLL), 541-563 (GAVS…LLIL), 568-590 (WAIQ…AFAF), 602-624 (ALYV…GWFY), 639-661 (IAHY…LAGW), and 682-704 (ALAS…GSMV). The interval 772 to 798 (PSGVSEHLEPEPVGTNPGTPNSEGPVD) is disordered.

Belongs to the emb family.

The protein localises to the cell membrane. In terms of biological role, arabinosyl transferase responsible for the polymerization of arabinose into the arabinan of arabinogalactan. This Mycolicibacterium smegmatis (Mycobacterium smegmatis) protein is Probable arabinosyltransferase A (embA).